A 148-amino-acid polypeptide reads, in one-letter code: Gas vesicle protein J (148 aa).

2 disordered regions span residues 1 to 21 and 118 to 148; these read MTTTPIHPTRPQTNSNRVIPT and EETTLTANNPEDLQPMYEVNSQEGDNSQLEA. Over residues 136–148 the composition is skewed to polar residues; that stretch reads VNSQEGDNSQLEA.

It belongs to the gas vesicle GvpA family. In terms of assembly, interacts with GvpA.

The protein localises to the gas vesicle. A minor component of the gas vesicle, might be involved in nucleating gas vesicle formation. Gas vesicles (GV) are hollow, gas filled proteinaceous nanostructures. During planktonic growth they allow positioning of the organism at a favorable depth for light or nutrient acquisition. Its function is as follows. Cluster expression in E.coli (gvpA1-gvpA2-gvpC-gvpN-gvpJ-gvpK-gvpF-gvpG-gvpV-gvpW) allows cells to float and produces irregularly shaped gas vesicles. This Nostoc sp. (strain PCC 7120 / SAG 25.82 / UTEX 2576) protein is Gas vesicle protein J.